The chain runs to 1315 residues: Serine-aspartate repeat-containing protein D (1315 aa).

Positions 1–35 are cleaved as a signal peptide; that stretch reads MLNRENKTAITRKGMVSNRLNKFSIRKYTVGTASI. The YSIRK-G/S signaling motif motif lies at 23 to 34; the sequence is FSIRKYTVGTAS. Residues 36–568 are ligand binding A region; the sequence is LVGTTLIFGL…NNQSGGAGQE (533 aa). The segment at 54–185 is disordered; the sequence is ESTNKELNEA…NKKVDAKTES (132 aa). 2 stretches are compositionally biased toward polar residues: residues 62–71 and 94–108; these read EATTSASDNQ and EMVS…SNGN. A compositionally biased stretch (basic and acidic residues) spans 130-145; sequence KSDEQASPKSTNEDLN. 2 stretches are compositionally biased toward polar residues: residues 146–155 and 163–173; these read TKQTISNQEA and NKSVVNVQPTN. Basic and acidic residues predominate over residues 174-183; sequence EENKKVDAKT. 5 consecutive CNA-B domains span residues 569–680, 681–791, 792–901, 902–1012, and 1013–1123; these read VYKI…IYKP, KYNL…YKTP, KYNL…FYKP, TYNL…YKTP, and KYSL…EEET. 3 disordered regions span residues 857–883, 972–992, and 1078–1291; these read ETPS…TSTT, YTPT…GLTT, and EKPA…SNNA. Composition is skewed to polar residues over residues 860–869 and 972–981; these read SGYTPTQVGS and YTPTSVTSGN. 4 stretches are compositionally biased toward acidic residues: residues 1091–1101, 1118–1134, 1142–1164, and 1172–1254; these read TEDDKDADGGE, YYEE…DSDS, and SDSD…DSDS. The short motif at 1278–1282 is the LPXTG sorting signal element; it reads LPETG. A Pentaglycyl murein peptidoglycan amidated threonine modification is found at Thr1281. Positions 1282-1315 are cleaved as a propeptide — removed by sortase; that stretch reads GNENSGSNNATLFGGLFAALGSLLLFGRRKKQNK.

The protein belongs to the serine-aspartate repeat-containing protein (SDr) family. As to quaternary structure, interacts with host DSG1; this interaction increases S.aureus adherence to keratinocytes. Post-translationally, anchored to the cell wall by sortase A.

It localises to the secreted. The protein localises to the cell wall. Functionally, cell surface-associated calcium-binding protein which plays an important role in adhesion and pathogenesis. Mediates interactions with components of the extracellular matrix such as host DSG1 to promote bacterial adhesion to host cells. Contributes to the resistance to killing by innate immune components such as neutrophils present in blood and thus attenuates bacterial clearance. The protein is Serine-aspartate repeat-containing protein D (sdrD) of Staphylococcus aureus (strain Newman).